The sequence spans 141 residues: Hemoglobin subunit alpha (141 aa).

The Globin domain occupies 1–141 (VLSPADKTNV…VSTVLTSKYR (141 aa)). Residue Ser3 is modified to Phosphoserine. Residue Lys7 is modified to N6-succinyllysine. Residue Thr8 is modified to Phosphothreonine. At Lys11 the chain carries N6-succinyllysine. At Lys16 the chain carries N6-acetyllysine; alternate. N6-succinyllysine; alternate is present on Lys16. Tyr24 carries the post-translational modification Phosphotyrosine. Position 35 is a phosphoserine (Ser35). Lys40 carries the N6-succinyllysine modification. Position 49 is a phosphoserine (Ser49). His58 lines the O2 pocket. His87 is a binding site for heme b. The residue at position 102 (Ser102) is a Phosphoserine. Thr108 carries the phosphothreonine modification. 2 positions are modified to phosphoserine: Ser124 and Ser131. Phosphothreonine occurs at positions 134 and 137. Ser138 is subject to Phosphoserine.

It belongs to the globin family. In terms of assembly, heterotetramer of two alpha chains and two beta chains. Red blood cells.

In terms of biological role, involved in oxygen transport from the lung to the various peripheral tissues. Hemopressin acts as an antagonist peptide of the cannabinoid receptor CNR1. Hemopressin-binding efficiently blocks cannabinoid receptor CNR1 and subsequent signaling. The polypeptide is Hemoglobin subunit alpha (HBA) (Taphozous georgianus (Sharp-nosed tomb bat)).